A 181-amino-acid polypeptide reads, in one-letter code: GATA zinc finger domain-containing protein 22 (181 aa).

A GATA-type zinc finger spans residues 118–145 (CQICLTNNTPYWRWSVIENNKIRVCNRC).

This is GATA zinc finger domain-containing protein 22 (gtaV) from Dictyostelium discoideum (Social amoeba).